The sequence spans 296 residues: MDTEKMITTPTHWPSPAKLNLFLYITGRRDNGYHELQTLFQFVDFGDELTVTANRETSSITITPEIPGVATEDNLIWKAATALQQHTSTTFGADIQLKKVLPMGGGIGGGSSNAATVLVALNHLWQLNLSDDQLAEIGLKLGADVPVFVRGHAAFAEGVGEQLQPANPDEKWYLVVKPQVSIATVDIFTHSELTRNTPKRALSTLLEQEYVNDCEKIVRMLYPEVDKQLSWLLQYAPSRLTGTGSCVFAEFSSKKEAELVLEQLPDTVSAFVAKGRNISPLKETLAEYQSAHPQSI.

Residue K18 is part of the active site. Position 102–112 (102–112 (PMGGGIGGGSS)) interacts with ATP. D144 is an active-site residue.

This sequence belongs to the GHMP kinase family. IspE subfamily.

The catalysed reaction is 4-CDP-2-C-methyl-D-erythritol + ATP = 4-CDP-2-C-methyl-D-erythritol 2-phosphate + ADP + H(+). The protein operates within isoprenoid biosynthesis; isopentenyl diphosphate biosynthesis via DXP pathway; isopentenyl diphosphate from 1-deoxy-D-xylulose 5-phosphate: step 3/6. Catalyzes the phosphorylation of the position 2 hydroxy group of 4-diphosphocytidyl-2C-methyl-D-erythritol. The sequence is that of 4-diphosphocytidyl-2-C-methyl-D-erythritol kinase from Vibrio atlanticus (strain LGP32) (Vibrio splendidus (strain Mel32)).